We begin with the raw amino-acid sequence, 730 residues long: Elongation factor 2 (730 aa).

Residues 19–260 (EKIRNIGIVA…MVIRFLPNPL (242 aa)) enclose the tr-type G domain. GTP is bound by residues 28-35 (AHIDHGKT), 94-98 (DTPGH), and 148-151 (NKVD). Residue His-596 is modified to Diphthamide.

This sequence belongs to the TRAFAC class translation factor GTPase superfamily. Classic translation factor GTPase family. EF-G/EF-2 subfamily.

It is found in the cytoplasm. Catalyzes the GTP-dependent ribosomal translocation step during translation elongation. During this step, the ribosome changes from the pre-translocational (PRE) to the post-translocational (POST) state as the newly formed A-site-bound peptidyl-tRNA and P-site-bound deacylated tRNA move to the P and E sites, respectively. Catalyzes the coordinated movement of the two tRNA molecules, the mRNA and conformational changes in the ribosome. In Methanosarcina thermophila, this protein is Elongation factor 2 (fusA).